The primary structure comprises 413 residues: Multidrug resistance protein MdtA (413 aa).

Positions 1 to 25 (MKNKRRTYFFQFAVLAVVIATAYFA) are cleaved as a signal peptide. The interval 394-413 (ANTYDQMDKSKPSNSKVENT) is disordered.

The protein belongs to the membrane fusion protein (MFP) (TC 8.A.1) family. As to quaternary structure, part of a tripartite efflux system composed of MdtA, MdtB and MdtC.

It localises to the cell inner membrane. In Xenorhabdus bovienii (strain SS-2004) (Xenorhabdus nematophila subsp. bovienii), this protein is Multidrug resistance protein MdtA.